The chain runs to 810 residues: Type I restriction enzyme EcoAI endonuclease subunit (810 aa).

One can recognise a Helicase ATP-binding domain in the interval 183 to 343; that stretch reads EAVSNGQNRV…TDYFGDPVYV (161 aa). 197-203 is an ATP binding site; the sequence is ATGTGKT. The Helicase C-terminal domain maps to 412–575; it reads TITDYLKRTN…DIADPESDFE (164 aa). Positions 578-588 are enriched in acidic residues; the sequence is LEEISEHDEEQ. Positions 578–608 are disordered; the sequence is LEEISEHDEEQVTGVDEPPAPPYQVTDTDDV.

It belongs to the HsdR family. The type I restriction/modification system is composed of three polypeptides R, M and S. The restriction enzyme has stoichiometry R(2)M(2)S(1) while the methyltransferase is M(2)S(1).

The catalysed reaction is Endonucleolytic cleavage of DNA to give random double-stranded fragments with terminal 5'-phosphates, ATP is simultaneously hydrolyzed.. The subtype B restriction (R) subunit of a type I restriction enzyme that recognizes 5'-GAGN(7)GTCA-3' and cleaves a random distance away. Subunit R is required for both nuclease and ATPase activities, but not for modification. After locating a non-methylated recognition site, the enzyme complex serves as a molecular motor that translocates DNA in an ATP-dependent manner until a collision occurs that triggers cleavage. This Escherichia coli protein is Type I restriction enzyme EcoAI endonuclease subunit.